Reading from the N-terminus, the 290-residue chain is Protease HtpX homolog (290 aa).

2 helical membrane-spanning segments follow: residues 4–24 (IFLFIATNIAVIAVMSVVLSL) and 39–59 (PMLLVFSLVVGFTGSIISLLI). His-144 is a Zn(2+) binding site. The active site involves Glu-145. His-148 contributes to the Zn(2+) binding site. A run of 2 helical transmembrane segments spans residues 159–179 (LVQGVVNTFVVFLSRVVGYFV) and 197–217 (ITVIVSQIVFGIAASVIVAWF). Glu-222 provides a ligand contact to Zn(2+).

This sequence belongs to the peptidase M48B family. Zn(2+) is required as a cofactor.

It is found in the cell inner membrane. This Janthinobacterium sp. (strain Marseille) (Minibacterium massiliensis) protein is Protease HtpX homolog.